The primary structure comprises 691 residues: Elongation factor G (691 aa).

The tr-type G domain occupies 8-282 (EKTRNIGIMA…AVVDYLPSPV (275 aa)). Residues 17 to 24 (AHIDAGKT), 81 to 85 (DTPGH), and 135 to 138 (NKMD) each bind GTP.

It belongs to the TRAFAC class translation factor GTPase superfamily. Classic translation factor GTPase family. EF-G/EF-2 subfamily.

It is found in the cytoplasm. In terms of biological role, catalyzes the GTP-dependent ribosomal translocation step during translation elongation. During this step, the ribosome changes from the pre-translocational (PRE) to the post-translocational (POST) state as the newly formed A-site-bound peptidyl-tRNA and P-site-bound deacylated tRNA move to the P and E sites, respectively. Catalyzes the coordinated movement of the two tRNA molecules, the mRNA and conformational changes in the ribosome. This Caldicellulosiruptor bescii (strain ATCC BAA-1888 / DSM 6725 / KCTC 15123 / Z-1320) (Anaerocellum thermophilum) protein is Elongation factor G.